The chain runs to 287 residues: Uroporphyrinogen-III C-methyltransferase (287 aa).

Polar residues predominate over residues 1–10 (MAGKTVTNGA). Residues 1 to 24 (MAGKTVTNGAAQGKAARSGADGAV) form a disordered region. S-adenosyl-L-methionine contacts are provided by residues Pro40, 116–118 (GGD), Thr146, and Met199.

The protein belongs to the precorrin methyltransferase family.

The enzyme catalyses uroporphyrinogen III + 2 S-adenosyl-L-methionine = precorrin-2 + 2 S-adenosyl-L-homocysteine + H(+). It participates in porphyrin-containing compound metabolism; siroheme biosynthesis; precorrin-2 from uroporphyrinogen III: step 1/1. Its function is as follows. Catalyzes the methylation of both C-2 and C-7 of uroporphyrinogen III leading to precorrin-1 and precorrin-2; their oxidative esterification gives respectively factor I octamethyl ester and sirohydrochlorin. Inactivation of uroporphyrinogen-III methyltransferase results in the loss of nitrite and nitric oxide reductase activities, but not of nitrous oxide reductase activity. Likely involved in heme D1 biosynthesis. The sequence is that of Uroporphyrinogen-III C-methyltransferase (nirE) from Paracoccus denitrificans (strain Pd 1222).